Consider the following 270-residue polypeptide: Putative pyruvate, phosphate dikinase regulatory protein (270 aa).

148-155 (GVSRTSKT) contributes to the ADP binding site.

It belongs to the pyruvate, phosphate/water dikinase regulatory protein family. PDRP subfamily.

The enzyme catalyses N(tele)-phospho-L-histidyl/L-threonyl-[pyruvate, phosphate dikinase] + ADP = N(tele)-phospho-L-histidyl/O-phospho-L-threonyl-[pyruvate, phosphate dikinase] + AMP + H(+). It carries out the reaction N(tele)-phospho-L-histidyl/O-phospho-L-threonyl-[pyruvate, phosphate dikinase] + phosphate + H(+) = N(tele)-phospho-L-histidyl/L-threonyl-[pyruvate, phosphate dikinase] + diphosphate. In terms of biological role, bifunctional serine/threonine kinase and phosphorylase involved in the regulation of the pyruvate, phosphate dikinase (PPDK) by catalyzing its phosphorylation/dephosphorylation. This Bacillus cytotoxicus (strain DSM 22905 / CIP 110041 / 391-98 / NVH 391-98) protein is Putative pyruvate, phosphate dikinase regulatory protein.